Here is a 547-residue protein sequence, read N- to C-terminus: Myrosinase 2 (547 aa).

A signal peptide spans 1-28 (MQHNTYIYILTMKLLGFALAILLVVATC). 3 cysteine pairs are disulfide-bonded: cysteine 36/cysteine 460, cysteine 44/cysteine 456, and cysteine 236/cysteine 244. Residues glutamine 69, histidine 171, and 216–217 (NQ) contribute to the a beta-D-glucoside site. Residue asparagine 340 is glycosylated (N-linked (GlcNAc...) asparagine). An a beta-D-glucoside-binding site is contributed by tyrosine 359. A glycan (N-linked (GlcNAc...) asparagine) is linked at asparagine 384. A beta-D-glucoside is bound by residues glutamate 430, tryptophan 479, 486-487 (EF), and phenylalanine 495. Glutamate 430 (nucleophile) is an active-site residue. N-linked (GlcNAc...) asparagine glycosylation is present at asparagine 504.

It belongs to the glycosyl hydrolase 1 family. In terms of assembly, interacts with MVP1. In terms of tissue distribution, expressed in phloem-associated cells.

The catalysed reaction is a thioglucoside + H2O = a sugar + a thiol.. May degrade glucosinolates (glucose residue linked by a thioglucoside bound to an amino acid derivative) to glucose, sulfate and any of the products: thiocyanates, isothiocyanates, nitriles, epithionitriles or oxazolidine-2-thiones. These toxic degradation products can deter insect herbivores. Seems to function in abscisic acid (ABA) and methyl jasmonate (MeJA) signaling in guard cells. Functionally redundant with TGG1. This chain is Myrosinase 2, found in Arabidopsis thaliana (Mouse-ear cress).